The primary structure comprises 160 residues: MGKSHGYRSRTRYMFQRDFRKHGAVHLSTYLKVYKVGDIVDIKANGSIQKGMPHKFYQGKTGVVYNVTKSSVGVIINKMVGNRYLEKRLNLRVEHIKHSKCRQEFLERVKANAAKRAEAKAQGVAVQLKRQPAQPRESRIVSTEGNVPQTLAPVPYETFI.

Residue lysine 32 forms a Glycyl lysine isopeptide (Lys-Gly) (interchain with G-Cter in ubiquitin) linkage.

It belongs to the eukaryotic ribosomal protein eL21 family. In terms of assembly, component of the large ribosomal subunit (LSU). Mature yeast ribosomes consist of a small (40S) and a large (60S) subunit. The 40S small subunit contains 1 molecule of ribosomal RNA (18S rRNA) and 33 different proteins (encoded by 57 genes). The large 60S subunit contains 3 rRNA molecules (25S, 5.8S and 5S rRNA) and 46 different proteins (encoded by 81 genes).

It localises to the cytoplasm. In terms of biological role, component of the ribosome, a large ribonucleoprotein complex responsible for the synthesis of proteins in the cell. The small ribosomal subunit (SSU) binds messenger RNAs (mRNAs) and translates the encoded message by selecting cognate aminoacyl-transfer RNA (tRNA) molecules. The large subunit (LSU) contains the ribosomal catalytic site termed the peptidyl transferase center (PTC), which catalyzes the formation of peptide bonds, thereby polymerizing the amino acids delivered by tRNAs into a polypeptide chain. The nascent polypeptides leave the ribosome through a tunnel in the LSU and interact with protein factors that function in enzymatic processing, targeting, and the membrane insertion of nascent chains at the exit of the ribosomal tunnel. The protein is Large ribosomal subunit protein eL21A of Saccharomyces cerevisiae (strain ATCC 204508 / S288c) (Baker's yeast).